Here is a 236-residue protein sequence, read N- to C-terminus: uncharacterized protein (236 aa).

This is an uncharacterized protein from Schizosaccharomyces pombe (strain 972 / ATCC 24843) (Fission yeast).